The following is a 116-amino-acid chain: Spexin (116 aa).

Residues 1–26 form the signal peptide; it reads MKGLRSLAATTLALFLVFVFLGNSSC. A propeptide spanning residues 27 to 35 is cleaved from the precursor; sequence APQRLLERR. Gln-49 bears the Glutamine amide mark. 2 consecutive propeptides follow at residues 50–116 and 74–116; these read GRRF…LLNW and PNPQ…LLNW. Residues 55 to 73 are compositionally biased toward basic and acidic residues; the sequence is SDQSRRKDLSDRPLPERRS. The tract at residues 55 to 77 is disordered; it reads SDQSRRKDLSDRPLPERRSPNPQ.

It belongs to the spexin family. In terms of tissue distribution, expressed in the type I glomic cells within the carotid body (at protein level). Expressed predominantly in pancreas, testis, kidney, brain and placenta. Expressed in submucosal layer of esophagus and stomach fundus.

The protein localises to the secreted. The protein resides in the extracellular space. Its subcellular location is the cytoplasmic vesicle. It localises to the secretory vesicle. Plays a role as a central modulator of cardiovascular and renal function and nociception. Also plays a role in energy metabolism and storage. Inhibits adrenocortical cell proliferation with minor stimulation on corticosteroid release. In terms of biological role, acts as a ligand for galanin receptors GALR2 and GALR3. Intracerebroventricular administration of the peptide induces an increase in arterial blood pressure, a decrease in both heart rate and renal excretion and delayed natriuresis. Intraventricular administration of the peptide induces antinociceptive activity. Also induces contraction of muscarinic-like stomach smooth muscles. Intraperitoneal administration of the peptide induces a reduction in food consumption and body weight. Inhibits long chain fatty acid uptake into adipocytes. Its function is as follows. Intracerebroventricular administration of the peptide induces a decrease in heart rate, but no change in arterial pressure, and an increase in urine flow rate. Intraventricular administration of the peptide induces antinociceptive activity. The sequence is that of Spexin (SPX) from Homo sapiens (Human).